The following is a 93-amino-acid chain: Microcin N immunity protein (93 aa).

The next 3 helical transmembrane spans lie at 3–23, 36–56, and 68–88; these read FLNF…FIVW, LSII…NYKI, and LFCF…YFIL.

It belongs to the MceB microcin immunity protein family.

Its subcellular location is the cell inner membrane. Its function is as follows. Probably able to protect the producing cell against microcin N (microcin 24). This Escherichia coli protein is Microcin N immunity protein.